The primary structure comprises 372 residues: Glutamate 5-kinase (372 aa).

Lysine 14 contacts ATP. Positions 54, 141, and 153 each coordinate substrate. Position 173–174 (threonine 173–aspartate 174) interacts with ATP. The PUA domain maps to arginine 280–methionine 358.

The protein belongs to the glutamate 5-kinase family.

The protein resides in the cytoplasm. It carries out the reaction L-glutamate + ATP = L-glutamyl 5-phosphate + ADP. Its pathway is amino-acid biosynthesis; L-proline biosynthesis; L-glutamate 5-semialdehyde from L-glutamate: step 1/2. In terms of biological role, catalyzes the transfer of a phosphate group to glutamate to form L-glutamate 5-phosphate. The polypeptide is Glutamate 5-kinase (Paraburkholderia phytofirmans (strain DSM 17436 / LMG 22146 / PsJN) (Burkholderia phytofirmans)).